Here is a 186-residue protein sequence, read N- to C-terminus: Ribosome-recycling factor (186 aa).

The protein belongs to the RRF family.

It localises to the cytoplasm. In terms of biological role, responsible for the release of ribosomes from messenger RNA at the termination of protein biosynthesis. May increase the efficiency of translation by recycling ribosomes from one round of translation to another. The protein is Ribosome-recycling factor of Nitratidesulfovibrio vulgaris (strain DP4) (Desulfovibrio vulgaris).